An 88-amino-acid polypeptide reads, in one-letter code: Selenoprotein W (88 aa).

The segment at residues 10–13 is a cross-link (cysteinyl-selenocysteine (Cys-Sec); redox-active); sequence CGAU. Residue Sec13 is a non-standard amino acid, selenocysteine. S-glutathionyl cysteine is present on Cys37.

Belongs to the SelWTH family. Selenoprotein W subfamily. In terms of assembly, interacts with DPYSL2, PRDX1, YWHAB, YWHAG, HSP70 and HSP90. In terms of tissue distribution, in the embryo, expressed in the developing nervous system and in mesoderm-derived tissues such as heart and limbs. In the adult, predominantly expressed in brain, skeletal muscle and heart.

It localises to the cytoplasm. Plays a role as a glutathione (GSH)-dependent antioxidant. May be involved in a redox-related process. May play a role in the myopathies of selenium deficiency. The protein is Selenoprotein W of Mus musculus (Mouse).